Here is a 199-residue protein sequence, read N- to C-terminus: Recombination protein RecR (199 aa).

The C4-type zinc-finger motif lies at 57 to 72 (CRSCRTFTEESHCPIC). Residues 81–176 (EQICVVETPA…SVSRIAHGVP (96 aa)) enclose the Toprim domain.

The protein belongs to the RecR family.

Functionally, may play a role in DNA repair. It seems to be involved in an RecBC-independent recombinational process of DNA repair. It may act with RecF and RecO. This Shewanella sediminis (strain HAW-EB3) protein is Recombination protein RecR.